The primary structure comprises 183 residues: MASSLMSNAATTMAAATTTAQANMVAPFNGLKSISAFPVTRKNNDITSVASNGGRVQCMQVWPPLGMKKFETLSYLPPLSEESLLKEVQYLLNNGWVPCLEFEPTHGFVYREHGNTPGYYDGRYWTMWKLPMFGCTDPSQVVAELEEAKKAYPEAFIRIIGFDNVRQVQCVSFIAYKPASYGA.

A chloroplast-targeting transit peptide spans 1 to 57 (MASSLMSNAATTMAAATTTAQANMVAPFNGLKSISAFPVTRKNNDITSVASNGGRVQ).

Belongs to the RuBisCO small chain family. Heterohexadecamer of 8 large and 8 small subunits.

Its subcellular location is the plastid. It localises to the chloroplast. RuBisCO catalyzes two reactions: the carboxylation of D-ribulose 1,5-bisphosphate, the primary event in carbon dioxide fixation, as well as the oxidative fragmentation of the pentose substrate. Both reactions occur simultaneously and in competition at the same active site. Although the small subunit is not catalytic it is essential for maximal activity. The sequence is that of Ribulose bisphosphate carboxylase small subunit, chloroplastic 4 from Mesembryanthemum crystallinum (Common ice plant).